Consider the following 790-residue polypeptide: Ice-structuring glycoprotein (790 aa).

A propeptide spanning residues 1–5 (VTAAP) is cleaved from the precursor.

In terms of processing, O-glycosylated; contains disaccharide galactose-N-acetylgalactosamine attached to threonines in AFGP8 and AFGP7. In terms of tissue distribution, synthesized by the liver and secreted into the blood from which they become distributed to almost the entire extracellular space.

Its subcellular location is the secreted. In terms of biological role, antifreeze proteins lower the blood freezing point. This Notothenia neglecta (Yellowbelly rockcod) protein is Ice-structuring glycoprotein (afgp8).